A 51-amino-acid polypeptide reads, in one-letter code: U-Asilidin(1)-Eru1a (51 aa).

The signal sequence occupies residues 1–23; that stretch reads MANYIDVLSFLAIICATVLATLA. Cystine bridges form between Cys26-Cys40, Cys33-Cys44, and Cys39-Cys49.

Belongs to the asilidin-1 family. In terms of tissue distribution, expressed by the venom gland. The most highly expressed peptides U-Asilidin1-Mar1a is around 3000 times higher expressed in the venom thoracic glands compared to its body tissues.

The protein localises to the secreted. In terms of biological role, induces neurotoxic effect on honeybees, including slow movements, disorientation and paralysis. Since it provokes similar symptoms than omega-atracotoxin, it is probable that it acts in the same way by inhibiting voltage-gated calcium channels. This chain is U-Asilidin(1)-Eru1a, found in Eutolmus rufibarbis (Golden-tabbed robberfly).